The chain runs to 290 residues: MEDHVLKKLNANGPAPHIPNLNLYGKKMNFSYMVMTLLGRNLQDLESTNFVVNKGFSRGTWSRVGIQWVYALKYVHYNGFIHRNVNTQNLFLGNEKDSERAKIIHILDFGLGRPFARYHARENKWIVRIARHSAEFRGSFRYASPNVHLRKEQGRVDDVWSLPYVIIELNGGKALPWQTDYRRGRVEQMKLNLTPKDVMSDMPACMDKLMPHLASLNYYQRPDDHMIFKCFWQVMENEKITPSSKFDWENEEPDMSVPPAAWENPDGRYFQSNPLEINGPPTPAEVDFVL.

One can recognise a Protein kinase domain in the interval 1–240 (MEDHVLKKLN…FWQVMENEKI (240 aa)). 2 disordered regions span residues 244-263 (SKFD…AAWE) and 268-290 (RYFQ…DFVL).

This sequence belongs to the protein kinase superfamily. CK1 Ser/Thr protein kinase family.

This Caenorhabditis elegans protein is Inactive tau-tubulin kinase ttbk-6.